Reading from the N-terminus, the 161-residue chain is Phosphopantetheine adenylyltransferase (161 aa).

Residue serine 10 coordinates substrate. ATP is bound by residues 10-11 (SF) and histidine 18. 3 residues coordinate substrate: lysine 42, alanine 75, and arginine 89. Residues 90-92 (GLR), glutamate 100, and 125-131 (LSPISSS) contribute to the ATP site.

It belongs to the bacterial CoaD family. In terms of assembly, homohexamer. Mg(2+) is required as a cofactor.

Its subcellular location is the cytoplasm. It carries out the reaction (R)-4'-phosphopantetheine + ATP + H(+) = 3'-dephospho-CoA + diphosphate. It functions in the pathway cofactor biosynthesis; coenzyme A biosynthesis; CoA from (R)-pantothenate: step 4/5. Its function is as follows. Reversibly transfers an adenylyl group from ATP to 4'-phosphopantetheine, yielding dephospho-CoA (dPCoA) and pyrophosphate. The sequence is that of Phosphopantetheine adenylyltransferase from Streptococcus agalactiae serotype III (strain NEM316).